The following is a 152-amino-acid chain: 6,7-dimethyl-8-ribityllumazine synthase (152 aa).

5-amino-6-(D-ribitylamino)uracil-binding positions include phenylalanine 18, 49–51 (ALE), and 75–77 (CVI). Residue 80 to 81 (ET) participates in (2S)-2-hydroxy-3-oxobutyl phosphate binding. The active-site Proton donor is the histidine 83. Asparagine 108 is a 5-amino-6-(D-ribitylamino)uracil binding site. Arginine 122 contacts (2S)-2-hydroxy-3-oxobutyl phosphate.

It belongs to the DMRL synthase family.

It catalyses the reaction (2S)-2-hydroxy-3-oxobutyl phosphate + 5-amino-6-(D-ribitylamino)uracil = 6,7-dimethyl-8-(1-D-ribityl)lumazine + phosphate + 2 H2O + H(+). The protein operates within cofactor biosynthesis; riboflavin biosynthesis; riboflavin from 2-hydroxy-3-oxobutyl phosphate and 5-amino-6-(D-ribitylamino)uracil: step 1/2. In terms of biological role, catalyzes the formation of 6,7-dimethyl-8-ribityllumazine by condensation of 5-amino-6-(D-ribitylamino)uracil with 3,4-dihydroxy-2-butanone 4-phosphate. This is the penultimate step in the biosynthesis of riboflavin. This Bartonella bacilliformis (strain ATCC 35685 / KC583 / Herrer 020/F12,63) protein is 6,7-dimethyl-8-ribityllumazine synthase.